Consider the following 279-residue polypeptide: Beta-porphyranase E (279 aa).

The signal sequence occupies residues 1–18; that stretch reads MGNTMLLTLLLVVVAAYG. Positions 19-277 constitute a GH16 domain; the sequence is QTPPPPEGFR…WVRSYTLLPV (259 aa). The substrate site is built by Trp-56, Arg-60, Glu-141, Glu-146, and Glu-243. The active-site Nucleophile is Glu-141. Glu-146 serves as the catalytic Proton donor.

This sequence belongs to the glycosyl hydrolase 16 family.

Its subcellular location is the periplasm. The enzyme catalyses Hydrolysis of beta-D-galactopyranose-(1-&gt;4)-alpha-L-galactopyranose-6-sulfate linkages in porphyran.. Its function is as follows. Cleaves the sulfated polysaccharide porphyran at the (1-&gt;4) linkages between beta-D-galactopyranose and alpha-L-galactopyranose-6-sulfate, forming mostly the disaccharide alpha-L-galactopyranose-6-sulfate-(1-&gt;3)-beta-D-galactose. The chain is Beta-porphyranase E (porE) from Zobellia galactanivorans (strain DSM 12802 / CCUG 47099 / CIP 106680 / NCIMB 13871 / Dsij).